The sequence spans 110 residues: UPF0060 membrane protein Bpet0062 (110 aa).

4 helical membrane passes run 7–27 (LGLF…PYLW), 33–53 (SAWL…LLTL), 63–83 (AAYG…VDGV), and 86–106 (ATTD…IMAG).

It belongs to the UPF0060 family.

The protein localises to the cell inner membrane. This Bordetella petrii (strain ATCC BAA-461 / DSM 12804 / CCUG 43448) protein is UPF0060 membrane protein Bpet0062.